The following is an 838-amino-acid chain: G-protein coupled receptor-associated sorting protein 2 (838 aa).

Disordered regions lie at residues 1 to 122, 218 to 292, 349 to 368, and 531 to 552; these read MTGA…GARP, ASNE…SNPF, RFRH…RAQK, and LELS…PSPE. The segment covering 13 to 31 has biased composition (basic and acidic residues); it reads KPEKKAGEEVIAGPEREND. Over residues 220–245 the composition is skewed to polar residues; sequence NESGFWSADETSTASSFWTGEETSVR. Residues 255 to 271 are compositionally biased toward basic residues; it reads RSRHRAKHQTNPRSRPR. 2 positions are modified to phosphoserine: S282 and S284. The span at 542–552 shows a compositional bias: polar residues; that stretch reads SLLQPDQPSPE.

It belongs to the GPRASP family. Interacts with cytoplasmic tails of a variety of G-protein coupled receptors such as muscarinic acetylcholine receptor M1/CHRM1 and calcitonin receptor/CALCR. Expressed in the brain.

Functionally, may play a role in regulation of a variety of G-protein coupled receptors. This Homo sapiens (Human) protein is G-protein coupled receptor-associated sorting protein 2 (GPRASP2).